A 304-amino-acid polypeptide reads, in one-letter code: UDP-N-acetylenolpyruvoylglucosamine reductase (304 aa).

An FAD-binding PCMH-type domain is found at 31–196 (KVGGPADYLA…ISAKFNLKPG (166 aa)). R175 is a catalytic residue. S225 functions as the Proton donor in the catalytic mechanism. E295 is a catalytic residue.

This sequence belongs to the MurB family. It depends on FAD as a cofactor.

It localises to the cytoplasm. The enzyme catalyses UDP-N-acetyl-alpha-D-muramate + NADP(+) = UDP-N-acetyl-3-O-(1-carboxyvinyl)-alpha-D-glucosamine + NADPH + H(+). The protein operates within cell wall biogenesis; peptidoglycan biosynthesis. Cell wall formation. The protein is UDP-N-acetylenolpyruvoylglucosamine reductase of Streptococcus thermophilus (strain CNRZ 1066).